We begin with the raw amino-acid sequence, 475 residues long: uncharacterized protein (475 aa).

The chain crosses the membrane as a helical span at residues His7–Tyr28. N-linked (GlcNAc...) asparagine; by host glycosylation is found at Asn73, Asn83, and Asn195. Residues Glu183–Leu233 adopt a coiled-coil conformation. Over residues Ser295 to Asn305 the composition is skewed to polar residues. Positions Ser295–Val324 are disordered. 2 N-linked (GlcNAc...) asparagine; by host glycosylation sites follow: Asn450 and Asn460.

Belongs to the asfivirus B475L family.

It is found in the host membrane. This is an uncharacterized protein from Ornithodoros (relapsing fever ticks).